Here is a 349-residue protein sequence, read N- to C-terminus: 4-hydroxy-2-oxovalerate aldolase 2 (349 aa).

Positions 12 to 264 (VRMTDTSLRD…KTGIDFFDIA (253 aa)) constitute a Pyruvate carboxyltransferase domain. 20 to 21 (RD) lines the substrate pocket. Asp21 provides a ligand contact to Mn(2+). The active-site Proton acceptor is the His24. Substrate is bound by residues Ser174 and His203. Mn(2+) contacts are provided by His203 and His205. Tyr294 contributes to the substrate binding site.

The protein belongs to the 4-hydroxy-2-oxovalerate aldolase family.

It carries out the reaction (S)-4-hydroxy-2-oxopentanoate = acetaldehyde + pyruvate. The sequence is that of 4-hydroxy-2-oxovalerate aldolase 2 (bphI-2) from Mycolicibacterium smegmatis (strain ATCC 700084 / mc(2)155) (Mycobacterium smegmatis).